A 220-amino-acid polypeptide reads, in one-letter code: Protein GrpE (220 aa).

Belongs to the GrpE family. In terms of assembly, homodimer.

Its subcellular location is the cytoplasm. Participates actively in the response to hyperosmotic and heat shock by preventing the aggregation of stress-denatured proteins, in association with DnaK and GrpE. It is the nucleotide exchange factor for DnaK and may function as a thermosensor. Unfolded proteins bind initially to DnaJ; upon interaction with the DnaJ-bound protein, DnaK hydrolyzes its bound ATP, resulting in the formation of a stable complex. GrpE releases ADP from DnaK; ATP binding to DnaK triggers the release of the substrate protein, thus completing the reaction cycle. Several rounds of ATP-dependent interactions between DnaJ, DnaK and GrpE are required for fully efficient folding. The sequence is that of Protein GrpE from Bartonella quintana (strain Toulouse) (Rochalimaea quintana).